Reading from the N-terminus, the 568-residue chain is CTP synthase (568 aa).

The segment at 1–276 (MPQARTIKHV…DAYLVRRLGL (276 aa)) is amidoligase domain. A CTP-binding site is contributed by S18. A UTP-binding site is contributed by S18. Residues 19–24 (SLGKGL) and D76 contribute to the ATP site. D76 and E150 together coordinate Mg(2+). CTP contacts are provided by residues 157–159 (DIE), 197–202 (KTKPTQ), and K233. Residues 197 to 202 (KTKPTQ) and K233 contribute to the UTP site. Positions 301–550 (RIALVGKYVD…VNAALEYRAA (250 aa)) constitute a Glutamine amidotransferase type-1 domain. G364 serves as a coordination point for L-glutamine. The active-site Nucleophile; for glutamine hydrolysis is C391. L-glutamine-binding positions include 392 to 395 (LGLQ), E415, and R476. Catalysis depends on residues H523 and E525.

Belongs to the CTP synthase family. In terms of assembly, homotetramer.

It catalyses the reaction UTP + L-glutamine + ATP + H2O = CTP + L-glutamate + ADP + phosphate + 2 H(+). The enzyme catalyses L-glutamine + H2O = L-glutamate + NH4(+). The catalysed reaction is UTP + NH4(+) + ATP = CTP + ADP + phosphate + 2 H(+). It functions in the pathway pyrimidine metabolism; CTP biosynthesis via de novo pathway; CTP from UDP: step 2/2. Allosterically activated by GTP, when glutamine is the substrate; GTP has no effect on the reaction when ammonia is the substrate. The allosteric effector GTP functions by stabilizing the protein conformation that binds the tetrahedral intermediate(s) formed during glutamine hydrolysis. Inhibited by the product CTP, via allosteric rather than competitive inhibition. Catalyzes the ATP-dependent amination of UTP to CTP with either L-glutamine or ammonia as the source of nitrogen. Regulates intracellular CTP levels through interactions with the four ribonucleotide triphosphates. This is CTP synthase from Saccharopolyspora erythraea (strain ATCC 11635 / DSM 40517 / JCM 4748 / NBRC 13426 / NCIMB 8594 / NRRL 2338).